The primary structure comprises 138 residues: Probable prefoldin subunit 4 (138 aa).

The protein belongs to the prefoldin subunit beta family. In terms of assembly, heterohexamer of two PFD-alpha type and four PFD-beta type subunits.

In terms of biological role, binds specifically to cytosolic chaperonin (c-CPN) and transfers target proteins to it. Binds to nascent polypeptide chain and promotes folding in an environment in which there are many competing pathways for nonnative proteins. This is Probable prefoldin subunit 4 from Drosophila melanogaster (Fruit fly).